The following is a 261-amino-acid chain: RNA-binding protein 1 (261 aa).

Disordered regions lie at residues 1–38 (MADG…SGNE) and 232–261 (QFSR…RGRR). The 86-residue stretch at 151–236 (PTLYIEGLPS…SHLRLQFSRY (86 aa)) folds into the RRM domain. Gly residues predominate over residues 240-254 (RSGGGPRSSGPPRGG).

As to expression, ubiquitous.

Its subcellular location is the nucleus speckle. The protein localises to the cytoplasmic granule. RNA-binding protein interacting with the enod40 RNA. The polypeptide is RNA-binding protein 1 (Medicago truncatula (Barrel medic)).